A 686-amino-acid chain; its full sequence is Methionine--tRNA ligase (686 aa).

The 'HIGH' region signature appears at 15 to 25; it reads PYANGSIHLGH. 4 residues coordinate Zn(2+): cysteine 146, cysteine 149, cysteine 159, and cysteine 162. A 'KMSKS' region motif is present at residues 332-336; the sequence is KMSKS. Lysine 335 contributes to the ATP binding site. The tRNA-binding domain occupies 585-686; the sequence is AFAAVDMRIA…EGAQPGMRVM (102 aa).

This sequence belongs to the class-I aminoacyl-tRNA synthetase family. MetG type 1 subfamily. As to quaternary structure, homodimer. Zn(2+) serves as cofactor.

The protein localises to the cytoplasm. The enzyme catalyses tRNA(Met) + L-methionine + ATP = L-methionyl-tRNA(Met) + AMP + diphosphate. Its function is as follows. Is required not only for elongation of protein synthesis but also for the initiation of all mRNA translation through initiator tRNA(fMet) aminoacylation. The polypeptide is Methionine--tRNA ligase (Vibrio campbellii (strain ATCC BAA-1116)).